Here is a 916-residue protein sequence, read N- to C-terminus: Oxysterol-binding protein 2 (916 aa).

3 disordered regions span residues 1–20 (MGKAAAPSRGGGCGGRSRGL), 34–121 (TAAP…PFTK), and 139–163 (PESGSLPALKPLPLLRPGQAKTPLG). Pro residues predominate over residues 49–58 (EPKPQPQPVP). Over residues 79 to 92 (RSEPVSETTSEPEP) the composition is skewed to low complexity. Over residues 99–113 (ELLQGSRPGSESSSG) the composition is skewed to polar residues. A compositionally biased stretch (low complexity) spans 144–155 (LPALKPLPLLRP). One can recognise a PH domain in the interval 182–274 (LDSFEGWLLK…WITALELAKA (93 aa)). Disordered regions lie at residues 282–301 (THSDDSGDDDEATTPADKSE) and 417–448 (FHSAPGRPANPSKSFIEGSLLTPKGEDSEEDE). Serine 287 bears the Phosphoserine mark. A Phosphoserine modification is found at serine 763. Positions 813–842 (EGVAPTDSRLRPDQRLMEKGRWDEANTEKQ) are disordered.

It belongs to the OSBP family. Interacts with CCDC159. As to expression, expressed mainly in retina, testis, and fetal liver.

It is found in the membrane. The protein resides in the cytoplasmic vesicle. Its subcellular location is the secretory vesicle. The protein localises to the acrosome. Functionally, binds 7-ketocholesterol. Acts during spermatid development where its function is required prior to the removal of cytoplasm from the sperm head. This is Oxysterol-binding protein 2 (OSBP2) from Homo sapiens (Human).